We begin with the raw amino-acid sequence, 1331 residues long: Alpha,alpha-trehalose-phosphate synthase [UDP-forming] 1 (1331 aa).

Residues 1–13 (MTDTATGVHSNAN) show a composition bias toward polar residues. Disordered regions lie at residues 1–50 (MTDT…DNDP), 71–118 (TGKE…SGQL), and 1312–1331 (PMDQEESSTLGASLGTSFGN). Positions 39-50 (DPFDRPKNDNDP) are enriched in basic and acidic residues. The span at 77 to 98 (LDESDDMTENEDHDEMANEDDG) shows a compositional bias: acidic residues. The span at 102–112 (NEKKVETRKMD) shows a compositional bias: basic and acidic residues. The span at 1318–1331 (SSTLGASLGTSFGN) shows a compositional bias: polar residues.

It in the N-terminal section; belongs to the glycosyltransferase 20 family. The protein in the C-terminal section; belongs to the gob-1 trehalose phosphatase family.

The enzyme catalyses D-glucose 6-phosphate + UDP-alpha-D-glucose = alpha,alpha-trehalose 6-phosphate + UDP + H(+). Its function is as follows. Catalyzes the production of trehalose from glucose-6-phosphate and UDP-alpha-D-glucose in a 2 step process. This chain is Alpha,alpha-trehalose-phosphate synthase [UDP-forming] 1 (tps-1), found in Caenorhabditis elegans.